The primary structure comprises 390 residues: NADH-quinone oxidoreductase subunit D (390 aa).

Belongs to the complex I 49 kDa subunit family. As to quaternary structure, NDH-1 is composed of 14 different subunits. Subunits NuoB, C, D, E, F, and G constitute the peripheral sector of the complex.

The protein localises to the cell membrane. The enzyme catalyses a quinone + NADH + 5 H(+)(in) = a quinol + NAD(+) + 4 H(+)(out). Its function is as follows. NDH-1 shuttles electrons from NADH, via FMN and iron-sulfur (Fe-S) centers, to quinones in the respiratory chain. The immediate electron acceptor for the enzyme in this species is believed to be ubiquinone. Couples the redox reaction to proton translocation (for every two electrons transferred, four hydrogen ions are translocated across the cytoplasmic membrane), and thus conserves the redox energy in a proton gradient. The sequence is that of NADH-quinone oxidoreductase subunit D from Wolbachia pipientis wMel.